Here is a 696-residue protein sequence, read N- to C-terminus: Elongation factor G (696 aa).

One can recognise a tr-type G domain in the interval 8 to 290 (ERYRNIGIMA…AVLDYLPSPL (283 aa)). GTP contacts are provided by residues 17–24 (AHIDAGKT), 88–92 (DTPGH), and 142–145 (NKMD).

It belongs to the TRAFAC class translation factor GTPase superfamily. Classic translation factor GTPase family. EF-G/EF-2 subfamily.

The protein resides in the cytoplasm. Its function is as follows. Catalyzes the GTP-dependent ribosomal translocation step during translation elongation. During this step, the ribosome changes from the pre-translocational (PRE) to the post-translocational (POST) state as the newly formed A-site-bound peptidyl-tRNA and P-site-bound deacylated tRNA move to the P and E sites, respectively. Catalyzes the coordinated movement of the two tRNA molecules, the mRNA and conformational changes in the ribosome. The polypeptide is Elongation factor G (Nitrosomonas europaea (strain ATCC 19718 / CIP 103999 / KCTC 2705 / NBRC 14298)).